The primary structure comprises 666 residues: MSDSHLTAFDKASKAGFIIALGIVYGDIGTSPLYTIQSLVENQGGVNQVSESFILGSISLIIWTLTLITTIKYVLIALKADNHHEGGIFSLFTLVRKMSPWLIIPAMIGGATLLSDGALTPAVTVTSAIEGLKAVPGLSHIYQNQTNVIITTLVILIVLFGIQRFGTGFIGKIFGPVMFIWFSFLGVSGFFNTLGHLEIFKAINPYYALHLLFSPENHRGIFILGSIFLATTGAEALYSDLGHVGRGNIYVSWPFVKMCIVLSYCGQAAWILANKHSGIELNPFFASVPSQLRVYLVSLATLAAIIASQALISGSFTLVSEAMRLKIFPLFRVTYPGANLGQLYIPVINWILFAVTSCTVLAFRTSAHMEAAYGLAITITMLMTTILLKYYLIKKGTRPILAHLVMAFFALVEFIFFLASAIKFMHGGYAVVILALAIVFVMFIWHAGTRIVFKYVKSLNLNDYKEQIKQLRDDVCFDLYQTNVVYLSNRMQDHMIDRSILYSILDKRPKRAQVYWFVNVQVTDEPYTAKYKVDMMGTDYMVRVNLYLGFRMPQTVPRYLRTIVQDLMESGRLPKQEQEYTITPGRDVGDFRFVLIEERVSNARQLSNFERFIMQTKASIKHVTASPMRWFGLQYSEVTLEVVPLILSDVLKLPIKELVPVEDSEA.

12 helical membrane passes run 16 to 36 (GFII…LYTI), 58 to 78 (ISLI…LIAL), 100 to 120 (PWLI…GALT), 141 to 161 (IYQN…VLFG), 165 to 185 (FGTG…FSFL), 221 to 241 (IFIL…YSDL), 253 to 273 (WPFV…WILA), 294 to 314 (VYLV…LISG), 343 to 363 (LYIP…VLAF), 373 to 393 (YGLA…YYLI), 399 to 419 (PILA…FFLA), and 424 to 444 (FMHG…VMFI).

Belongs to the HAK/KUP transporter (TC 2.A.72) family.

The protein localises to the cell membrane. The catalysed reaction is K(+)(in) + H(+)(in) = K(+)(out) + H(+)(out). Its function is as follows. Transport of potassium into the cell. Likely operates as a K(+):H(+) symporter. The protein is Probable potassium transport system protein Kup of Streptococcus pyogenes serotype M1.